The sequence spans 91 residues: uncharacterized protein (91 aa).

It is found in the plastid. It localises to the cyanelle. This is an uncharacterized protein from Cyanophora paradoxa.